A 79-amino-acid polypeptide reads, in one-letter code: MDVQQFFVVAVFFLIPIFCFREAWKGWRAGAIDKRVKNAPEPVYVWRAKNPGLFFAYMVAYIGFGILSIGMIVYLIFYR.

A helical membrane pass occupies residues 53-73 (LFFAYMVAYIGFGILSIGMIV).

It is found in the membrane. This is an uncharacterized protein from Escherichia coli O157:H7.